Reading from the N-terminus, the 475-residue chain is Ribulose bisphosphate carboxylase large chain (475 aa).

Positions 1–2 are excised as a propeptide; sequence MS. N-acetylproline is present on P3. K14 is subject to N6,N6,N6-trimethyllysine. 2 residues coordinate substrate: N123 and T173. The active-site Proton acceptor is the K175. K177 lines the substrate pocket. Mg(2+) contacts are provided by K201, D203, and E204. Residue K201 is modified to N6-carboxylysine. H294 acts as the Proton acceptor in catalysis. Substrate-binding residues include R295, H327, and S379.

Belongs to the RuBisCO large chain family. Type I subfamily. In terms of assembly, heterohexadecamer of 8 large chains and 8 small chains; disulfide-linked. The disulfide link is formed within the large subunit homodimers. Mg(2+) is required as a cofactor. In terms of processing, the disulfide bond which can form in the large chain dimeric partners within the hexadecamer appears to be associated with oxidative stress and protein turnover.

Its subcellular location is the plastid. It localises to the chloroplast. The catalysed reaction is 2 (2R)-3-phosphoglycerate + 2 H(+) = D-ribulose 1,5-bisphosphate + CO2 + H2O. It carries out the reaction D-ribulose 1,5-bisphosphate + O2 = 2-phosphoglycolate + (2R)-3-phosphoglycerate + 2 H(+). RuBisCO catalyzes two reactions: the carboxylation of D-ribulose 1,5-bisphosphate, the primary event in carbon dioxide fixation, as well as the oxidative fragmentation of the pentose substrate in the photorespiration process. Both reactions occur simultaneously and in competition at the same active site. In Fagopyrum esculentum subsp. ancestrale (Wild buckwheat), this protein is Ribulose bisphosphate carboxylase large chain.